A 173-amino-acid chain; its full sequence is Mediator of RNA polymerase II transcription subunit 10 (173 aa).

Positions 1 to 20 (MDPNSPMFQNTPQQPMSLQR) are enriched in polar residues. Residues 1–45 (MDPNSPMFQNTPQQPMSLQRSVDDRIDRERTAKKEKDDEKKKQED) form a disordered region. Over residues 21 to 45 (SVDDRIDRERTAKKEKDDEKKKQED) the composition is skewed to basic and acidic residues.

The protein belongs to the Mediator complex subunit 10 family. Component of the Mediator complex.

It is found in the nucleus. In terms of biological role, component of the Mediator complex, a coactivator involved in the regulated transcription of nearly all RNA polymerase II-dependent genes. Mediator functions as a bridge to convey information from gene-specific regulatory proteins to the basal RNA polymerase II transcription machinery. Mediator is recruited to promoters by direct interactions with regulatory proteins and serves as a scaffold for the assembly of a functional preinitiation complex with RNA polymerase II and the general transcription factors. This is Mediator of RNA polymerase II transcription subunit 10 (mdt-10) from Caenorhabditis briggsae.